Reading from the N-terminus, the 62-residue chain is Ponericin-W-like 32.2 (62 aa).

The first 23 residues, 1 to 23, serve as a signal peptide directing secretion; that stretch reads MKCKKQLLVIFFAYFLVVNESEA. Residues 49 to 62 constitute a propeptide that is removed on maturation; it reads RALMKRDLEDIMDP.

This sequence belongs to the non-disulfide-bridged peptide (NDBP) superfamily. Medium-length antimicrobial peptide (group 3) family. Ponericin-W subfamily. As to expression, expressed by the venom gland.

It is found in the secreted. It localises to the target cell membrane. In terms of biological role, antimicrobial peptide with potent activity against a range of Gram-positive and Gram-negative bacteria. Has high hemolytic activity against erythrocytes. May act by disrupting the integrity of the bacterial cell membrane. In Lychas mucronatus (Chinese swimming scorpion), this protein is Ponericin-W-like 32.2.